Reading from the N-terminus, the 292-residue chain is Elongation factor Ts (292 aa).

The interval 79–82 (TDFV) is involved in Mg(2+) ion dislocation from EF-Tu.

It belongs to the EF-Ts family.

It localises to the cytoplasm. Functionally, associates with the EF-Tu.GDP complex and induces the exchange of GDP to GTP. It remains bound to the aminoacyl-tRNA.EF-Tu.GTP complex up to the GTP hydrolysis stage on the ribosome. The polypeptide is Elongation factor Ts (Xanthomonas axonopodis pv. citri (strain 306)).